The following is a 518-amino-acid chain: Sugar transport protein MST3 (518 aa).

The Cytoplasmic segment spans residues 1–18 (MAGGAVVSTGAGKDYPGK). The helical transmembrane segment at 19 to 39 (LTLFVFFTCVVAATGGLIFGY) threads the bilayer. Over 40–80 (DIGISGGVTSMDPFLRKFFPEVYRKKQMADKNNQYCKYDNQ) the chain is Extracellular. The helical transmembrane segment at 81–101 (LLQTFTSSLYLAALVSSFFAA) threads the bilayer. The Cytoplasmic segment spans residues 102 to 117 (TVTRVLGRKWSMFAGG). Residues 118–138 (LTFLIGAALNGAAENVAMLIV) traverse the membrane as a helical segment. Over 139-140 (GR) the chain is Extracellular. A helical transmembrane segment spans residues 141 to 161 (ILLGVGVGFANQSVPVYLSEM). Topologically, residues 162 to 167 (APARLR) are cytoplasmic. The chain crosses the membrane as a helical span at residues 168 to 188 (GMLNIGFQLMITIGILAAELI). At 189–202 (NYGTAKIKAGWGWR) the chain is on the extracellular side. A helical transmembrane segment spans residues 203–223 (VSLALAAVPAAIITLGSLFLP). Over 224–290 (DTPNSLIDRG…YRAQLTMAIC (67 aa)) the chain is Cytoplasmic. Residues 291–311 (IPFFQQLTGINVIMFYAPVLF) form a helical membrane-spanning segment. Residues 312-322 (DTLGFKSDASL) are Extracellular-facing. Residues 323 to 343 (MSAVITGLVNVFATLVSIFTV) traverse the membrane as a helical segment. Topologically, residues 344–351 (DRLGRRKL) are cytoplasmic. Residues 352–372 (FLQGGAQMVVCQVVVGTLIAV) form a helical membrane-spanning segment. Residues 373–387 (KFGTSGIGDIPKGYA) lie on the Extracellular side of the membrane. Residues 388-408 (AVVVLFICMYVAGFAWSWGPL) traverse the membrane as a helical segment. The Cytoplasmic segment spans residues 409–427 (GWLVPSEIFPLEIRPAGQS). A helical membrane pass occupies residues 428-448 (INVSVNMLFTFVIAQAFLTML). Over 449–452 (CHMK) the chain is Extracellular. The chain crosses the membrane as a helical span at residues 453-473 (FGLFYFFAGWVVIMTVFIALF). Residues 474 to 518 (LPETKNVPIEEMVLVWKSHWFWRRFIGDHDVHVGANHVSNNKLQP) are Cytoplasmic-facing.

The protein belongs to the major facilitator superfamily. Sugar transporter (TC 2.A.1.1) family. In terms of tissue distribution, highly expressed in roots. Expressed in xylem and sclerenchyma cells of roots. Expressed at low levels in leaves.

The protein resides in the membrane. Mediates active uptake of hexoses by sugar:proton symport. Can transport glucose, xylose and 3-O-methylglucose. May be involved in the accumulation of monosaccharides required for cell wall synthesis during root development. The polypeptide is Sugar transport protein MST3 (Oryza sativa subsp. japonica (Rice)).